A 275-amino-acid chain; its full sequence is Fructose permease IID component (275 aa).

Residues 5–274 (KRLTKKEIFS…GILGYWAGFL (270 aa)) enclose the PTS EIID domain. Helical transmembrane passes span 100–120 (MKIG…WGTI), 127–147 (LGAS…FFLL), 187–207 (ILGL…NIPI), 227–247 (VLDS…VAWM), and 255–275 (LLII…GFLA).

The protein localises to the cell membrane. Its function is as follows. The phosphoenolpyruvate-dependent sugar phosphotransferase system (PTS), a major carbohydrate active -transport system, catalyzes the phosphorylation of incoming sugar substrates concomitant with their translocation across the cell membrane. This system is involved in fructose transport. This Bacillus subtilis (strain 168) protein is Fructose permease IID component (levG).